We begin with the raw amino-acid sequence, 287 residues long: 2' cyclic ADP-D-ribose synthase BtTIR (287 aa).

Residues 155–287 form the TIR domain; it reads KQYDFFISHA…DDIVENLKNL (133 aa). The active site involves glutamate 230.

Homodimer.

The enzyme catalyses NAD(+) = 2'cADPR + nicotinamide + H(+). NAD(+) hydrolase (NADase) that cleaves NAD(+) into nicotinamide and 2' cyclic ADP-D-ribose (2'cADPR). The sequence is that of 2' cyclic ADP-D-ribose synthase BtTIR from Bacteroides thetaiotaomicron.